Here is a 180-residue protein sequence, read N- to C-terminus: Negative modulator of initiation of replication (180 aa).

The interval 115–119 (RTRVY) is interaction with DNA.

This sequence belongs to the SeqA family. In terms of assembly, homodimer. Polymerizes to form helical filaments.

It localises to the cytoplasm. In terms of biological role, negative regulator of replication initiation, which contributes to regulation of DNA replication and ensures that replication initiation occurs exactly once per chromosome per cell cycle. Binds to pairs of hemimethylated GATC sequences in the oriC region, thus preventing assembly of replication proteins and re-initiation at newly replicated origins. Repression is relieved when the region becomes fully methylated. This chain is Negative modulator of initiation of replication, found in Aliivibrio fischeri (strain ATCC 700601 / ES114) (Vibrio fischeri).